Here is a 472-residue protein sequence, read N- to C-terminus: MFEVVIGLEVHTQLNTKTKIFCSCATSFGEAPNTNVCPTCLALPGALPVLNEEAVKKAIAFGKAVNAAINKKSVFNRKNYFYPDLPKAYQISQFDIPIVEKGELFINVNGENKRIGITRAHLEEDAGKNIHENNFSKVDLNRAGTPLLEIVSEPELRSSDEAVAYLKKLHSIIRFLDISDANMQEGSFRCDANVSIRPKGDTKLYTRVEIKNLNSFRFIQKAIDFEVKRQSEAWEDGTYEQEVVQETRLFDTTNLVTRSMRGKEEAAEYRYFPDPDLLPVLLKDEFLQIKIPELPDEKKMRFVSELGIKESDAEVIISSLEMSRFFESLISQNLSPKLCVNWLNTELMGFLKGELTIENSPVDAQKLGDLIKRIEDGTISAKAAKDVLAFVFENTNVEIDEAIEKLGLKQVSDDSAIEAVIEQILNANADKVAEYKSGKDKLFGFFVGQTMKEGKRAFNPAKVNEILKAKLG.

Belongs to the GatB/GatE family. GatB subfamily. As to quaternary structure, heterotrimer of A, B and C subunits.

The enzyme catalyses L-glutamyl-tRNA(Gln) + L-glutamine + ATP + H2O = L-glutaminyl-tRNA(Gln) + L-glutamate + ADP + phosphate + H(+). The catalysed reaction is L-aspartyl-tRNA(Asn) + L-glutamine + ATP + H2O = L-asparaginyl-tRNA(Asn) + L-glutamate + ADP + phosphate + 2 H(+). Allows the formation of correctly charged Asn-tRNA(Asn) or Gln-tRNA(Gln) through the transamidation of misacylated Asp-tRNA(Asn) or Glu-tRNA(Gln) in organisms which lack either or both of asparaginyl-tRNA or glutaminyl-tRNA synthetases. The reaction takes place in the presence of glutamine and ATP through an activated phospho-Asp-tRNA(Asn) or phospho-Glu-tRNA(Gln). This is Aspartyl/glutamyl-tRNA(Asn/Gln) amidotransferase subunit B from Campylobacter jejuni subsp. doylei (strain ATCC BAA-1458 / RM4099 / 269.97).